The sequence spans 435 residues: Indole diterpene prenyltransferase atmD (435 aa).

L-tryptophan-binding positions include 81–82 (AY) and Glu90. Substrate-binding residues include Arg103, Lys190, Arg261, Lys263, Tyr265, Tyr346, and Tyr413.

The protein belongs to the tryptophan dimethylallyltransferase family.

Indole diterpene prenyltransferase; part of the ATM2 gene cluster that mediates the biosynthesis of aflatrem, a tremorgenic mycotoxin with acute neurotoxic effects. Synthesis of geranylgeranyl diphosphate (GGPP) by AtmG (a GGPP synthase) precedes condensation of GGPP with indole 3-glycerol phosphate, followed by epoxidation and cyclization by AtmM (a FAD-dependent monooxygenase) and AtmC (a prenyltransferase) to produce paspaline. AtmB is also essential for paspaline production, but its exact role has not been identified yet. AtmP, a cytochrome P450 monooxygenase, subsequently converts paspaline to 13-desoxypaxilline via PC-M6 by removal of the C-30 methyl group and oxidation at C-10. AtmQ, a cytochrome P450 monooxygenase, then catalyzes the oxidation of 13-desoxypaxilline, first at C-7 to produce paspalicine and then at C-13 to form paspalinine. Finally, AtmD prenylates paspalinine to form aflatrem. This Aspergillus flavus protein is Indole diterpene prenyltransferase atmD.